A 629-amino-acid chain; its full sequence is tRNA uridine 5-carboxymethylaminomethyl modification enzyme MnmG (629 aa).

Position 13-18 (13-18 (GGGHAG)) interacts with FAD. 273-287 (GPRYCPSIEDKVVRF) lines the NAD(+) pocket.

Belongs to the MnmG family. Homodimer. Heterotetramer of two MnmE and two MnmG subunits. It depends on FAD as a cofactor.

It is found in the cytoplasm. Functionally, NAD-binding protein involved in the addition of a carboxymethylaminomethyl (cmnm) group at the wobble position (U34) of certain tRNAs, forming tRNA-cmnm(5)s(2)U34. The protein is tRNA uridine 5-carboxymethylaminomethyl modification enzyme MnmG of Alkalilimnicola ehrlichii (strain ATCC BAA-1101 / DSM 17681 / MLHE-1).